A 387-amino-acid polypeptide reads, in one-letter code: 3-ketoacyl-CoA thiolase (387 aa).

Cys-91 acts as the Acyl-thioester intermediate in catalysis. Residues His-343 and Cys-373 each act as proton acceptor in the active site.

The protein belongs to the thiolase-like superfamily. Thiolase family. As to quaternary structure, heterotetramer of two alpha chains (FadB) and two beta chains (FadA).

The protein localises to the cytoplasm. It catalyses the reaction an acyl-CoA + acetyl-CoA = a 3-oxoacyl-CoA + CoA. Its pathway is lipid metabolism; fatty acid beta-oxidation. Functionally, catalyzes the final step of fatty acid oxidation in which acetyl-CoA is released and the CoA ester of a fatty acid two carbons shorter is formed. The protein is 3-ketoacyl-CoA thiolase of Escherichia coli O139:H28 (strain E24377A / ETEC).